The following is a 451-amino-acid chain: Cytochrome c biogenesis protein CcsB (451 aa).

The next 3 helical transmembrane spans lie at 30 to 50 (LRLA…GTVI), 89 to 109 (TWWF…CTFT), and 175 to 195 (IGPI…IWGA).

This sequence belongs to the Ccs1/CcsB family. May interact with CcsA.

The protein localises to the cellular thylakoid membrane. Functionally, required during biogenesis of c-type cytochromes (cytochrome c6 and cytochrome f) at the step of heme attachment. This is Cytochrome c biogenesis protein CcsB from Crocosphaera subtropica (strain ATCC 51142 / BH68) (Cyanothece sp. (strain ATCC 51142)).